The chain runs to 112 residues: Putative inner membrane protein YafU (112 aa).

Residues 1–21 (MSSERDLVNFLGDFSMDVAKA) lie on the Cytoplasmic side of the membrane. A helical membrane pass occupies residues 22–42 (VIAGGVATAIGSLASFACVSF). G43 is a topological domain (periplasmic). The helical transmembrane segment at 44–64 (FPVILVGGAILLTGIVCTVVL) threads the bilayer. Topologically, residues 65–112 (NEIDAQCHLSEKLKYAIRDGLKRQQELDKWKRENMTPFMYVLNTPPVI) are cytoplasmic.

It is found in the cell inner membrane. This is Putative inner membrane protein YafU (yafU) from Escherichia coli (strain K12).